Reading from the N-terminus, the 309-residue chain is Ribonuclease Z (309 aa).

The Zn(2+) site is built by histidine 63, histidine 65, aspartate 67, histidine 68, histidine 145, aspartate 216, and histidine 274. The Proton acceptor role is filled by aspartate 67.

The protein belongs to the RNase Z family. In terms of assembly, homodimer. It depends on Zn(2+) as a cofactor.

The enzyme catalyses Endonucleolytic cleavage of RNA, removing extra 3' nucleotides from tRNA precursor, generating 3' termini of tRNAs. A 3'-hydroxy group is left at the tRNA terminus and a 5'-phosphoryl group is left at the trailer molecule.. Zinc phosphodiesterase, which displays some tRNA 3'-processing endonuclease activity. Probably involved in tRNA maturation, by removing a 3'-trailer from precursor tRNA. This chain is Ribonuclease Z, found in Streptococcus agalactiae serotype Ia (strain ATCC 27591 / A909 / CDC SS700).